Reading from the N-terminus, the 121-residue chain is MKLLIVFGLLTSVYCIHKECSIQECCENQPYQIEDPCPIHYYSDWFIKIGSRKSARLVQLCEGDYGKRIPIHYEMFGNYTISCEPLEINCQAPPVGSLIVRCSYDYDFVEHHDVRVVLDFI.

Residues Met-1–Cys-15 form the signal peptide. Positions Glu-19 to Ile-121 constitute an SARS ORF8 Ig-like domain. 3 disulfide bridges follow: Cys-25/Cys-90, Cys-37/Cys-102, and Cys-61/Cys-83.

The sequence is that of Non-structural protein 8 from Rhinolophus macrotis (Big-eared horseshoe bat).